The chain runs to 429 residues: Cytochrome bc1 complex Rieske iron-sulfur subunit (429 aa).

A disordered region spans residues 1–45; the sequence is MSRADDDAVGVPPTCGGRSDEEERRIVPGPNPQDGAKDGAKATAV. Helical transmembrane passes span 96 to 116, 137 to 157, and 207 to 227; these read VAVWLLLGGVFGLALLLIFLF, PLYGLTFGLSILSIAIGAVLY, and FGVGMGAFGLGTLVAFAGGLI. In terms of domain architecture, Rieske spans 316–410; it reads RNPVMLIRIK…ITIDTDGYLV (95 aa). The [2Fe-2S] cluster site is built by Cys-353, His-355, Cys-372, and His-375. Cys-358 and Cys-374 form a disulfide bridge.

The protein belongs to the Rieske iron-sulfur protein family. The cytochrome bc1 complex is composed of a cytochrome b (QcrB), the Rieske iron-sulfur protein (QcrA) and a diheme cytochrome c (QcrC) subunit. [2Fe-2S] cluster is required as a cofactor.

The protein localises to the cell membrane. Its function is as follows. Iron-sulfur subunit of the cytochrome bc1 complex, an essential component of the respiratory electron transport chain required for ATP synthesis. The bc1 complex catalyzes the oxidation of menaquinol and the reduction of cytochrome c in the respiratory chain. The bc1 complex operates through a Q-cycle mechanism that couples electron transfer to generation of the proton gradient that drives ATP synthesis. This is Cytochrome bc1 complex Rieske iron-sulfur subunit (qcrA) from Mycobacterium tuberculosis (strain CDC 1551 / Oshkosh).